We begin with the raw amino-acid sequence, 233 residues long: Isoprenyl transferase (233 aa).

D12 is a catalytic residue. D12 serves as a coordination point for Mg(2+). Residues 13–16, W17, R25, H29, and 57–59 contribute to the substrate site; these read GNGR and STE. N60 acts as the Proton acceptor in catalysis. Substrate is bound by residues W61, R63, R178, and 184-186; that span reads RLS. E197 serves as a coordination point for Mg(2+).

This sequence belongs to the UPP synthase family. In terms of assembly, homodimer. It depends on Mg(2+) as a cofactor.

Functionally, catalyzes the condensation of isopentenyl diphosphate (IPP) with allylic pyrophosphates generating different type of terpenoids. This is Isoprenyl transferase from Thermotoga maritima (strain ATCC 43589 / DSM 3109 / JCM 10099 / NBRC 100826 / MSB8).